A 378-amino-acid chain; its full sequence is Cytochrome b (378 aa).

4 consecutive transmembrane segments (helical) span residues 33-53 (SGSL…FLSM), 77-98 (WLIR…YFHI), 113-133 (XNVG…GYVL), and 178-198 (FFAF…IHLI). Residues His-83 and His-97 each coordinate heme b. His-196 lines the heme b pocket. His-201 contacts a ubiquinone. The next 4 membrane-spanning stretches (helical) occupy residues 226-246 (FKDL…ALFS), 288-308 (LGGV…PILH), 320-340 (LTQF…WIGG), and 347-367 (FIII…VLFP).

This sequence belongs to the cytochrome b family. The cytochrome bc1 complex contains 3 respiratory subunits (MT-CYB, CYC1 and UQCRFS1), 2 core proteins (UQCRC1 and UQCRC2) and probably 6 low-molecular weight proteins. It depends on heme b as a cofactor.

It localises to the mitochondrion inner membrane. Functionally, component of the ubiquinol-cytochrome c reductase complex (complex III or cytochrome b-c1 complex) that is part of the mitochondrial respiratory chain. The b-c1 complex mediates electron transfer from ubiquinol to cytochrome c. Contributes to the generation of a proton gradient across the mitochondrial membrane that is then used for ATP synthesis. This chain is Cytochrome b (mt-cyb), found in Nannacara anomala (Goldeneye cichlid).